A 411-amino-acid chain; its full sequence is Adenylosuccinate synthetase (411 aa).

GTP is bound by residues 11–17 (GDEGKGK) and 39–41 (GHT). D12 serves as the catalytic Proton acceptor. Residues D12 and G39 each coordinate Mg(2+). IMP contacts are provided by residues 12–15 (DEGK), 37–40 (NAGH), T121, R135, Q215, T230, and R294. The Proton donor role is filled by H40. 290–296 (TTTKRPR) contributes to the substrate binding site. Residues R296, 322 to 324 (KLD), and 400 to 402 (STS) each bind GTP.

It belongs to the adenylosuccinate synthetase family. Homodimer. Mg(2+) serves as cofactor.

It localises to the cytoplasm. It carries out the reaction IMP + L-aspartate + GTP = N(6)-(1,2-dicarboxyethyl)-AMP + GDP + phosphate + 2 H(+). It participates in purine metabolism; AMP biosynthesis via de novo pathway; AMP from IMP: step 1/2. Plays an important role in the de novo pathway of purine nucleotide biosynthesis. Catalyzes the first committed step in the biosynthesis of AMP from IMP. The sequence is that of Adenylosuccinate synthetase from Helicobacter pylori (strain G27).